Reading from the N-terminus, the 236-residue chain is Small ribosomal subunit protein uS2c (236 aa).

It belongs to the universal ribosomal protein uS2 family.

It is found in the plastid. Its subcellular location is the chloroplast. This Populus alba (White poplar) protein is Small ribosomal subunit protein uS2c (rps2).